We begin with the raw amino-acid sequence, 186 residues long: TATA-box-binding protein 2 (186 aa).

2 repeat units span residues 10 to 86 (IQNV…FDKL) and 101 to 179 (VQNI…VERI). Residues K53 and K63 each participate in a glycyl lysine isopeptide (Lys-Gly) (interchain with G-Cter in SAMP2) cross-link.

It belongs to the TBP family.

Its function is as follows. General factor that plays a role in the activation of archaeal genes transcribed by RNA polymerase. Binds specifically to the TATA box promoter element which lies close to the position of transcription initiation. The sequence is that of TATA-box-binding protein 2 (tbp2) from Haloferax volcanii (strain ATCC 29605 / DSM 3757 / JCM 8879 / NBRC 14742 / NCIMB 2012 / VKM B-1768 / DS2) (Halobacterium volcanii).